The chain runs to 106 residues: MSKFYEWISPDSDVLELEKTGLKPPPMYKVVLNNDDYTPMEFVVEVLDKFFSMDLEKATQLMLTVHYEGKAVCGVFTAEVAETKVAQVNIYSRDNEHPLLCTMEQA.

Belongs to the ClpS family. As to quaternary structure, binds to the N-terminal domain of the chaperone ClpA.

Its function is as follows. Involved in the modulation of the specificity of the ClpAP-mediated ATP-dependent protein degradation. The protein is ATP-dependent Clp protease adapter protein ClpS of Aliivibrio salmonicida (strain LFI1238) (Vibrio salmonicida (strain LFI1238)).